A 299-amino-acid polypeptide reads, in one-letter code: Phosphatidylserine decarboxylase proenzyme (299 aa).

Catalysis depends on charge relay system; for autoendoproteolytic cleavage activity residues D115, H171, and S258. S258 serves as the catalytic Schiff-base intermediate with substrate; via pyruvic acid; for decarboxylase activity. S258 carries the post-translational modification Pyruvic acid (Ser); by autocatalysis.

Belongs to the phosphatidylserine decarboxylase family. PSD-B subfamily. Prokaryotic type II sub-subfamily. Heterodimer of a large membrane-associated beta subunit and a small pyruvoyl-containing alpha subunit. It depends on pyruvate as a cofactor. Post-translationally, is synthesized initially as an inactive proenzyme. Formation of the active enzyme involves a self-maturation process in which the active site pyruvoyl group is generated from an internal serine residue via an autocatalytic post-translational modification. Two non-identical subunits are generated from the proenzyme in this reaction, and the pyruvate is formed at the N-terminus of the alpha chain, which is derived from the carboxyl end of the proenzyme. The autoendoproteolytic cleavage occurs by a canonical serine protease mechanism, in which the side chain hydroxyl group of the serine supplies its oxygen atom to form the C-terminus of the beta chain, while the remainder of the serine residue undergoes an oxidative deamination to produce ammonia and the pyruvoyl prosthetic group on the alpha chain. During this reaction, the Ser that is part of the protease active site of the proenzyme becomes the pyruvoyl prosthetic group, which constitutes an essential element of the active site of the mature decarboxylase.

Its subcellular location is the cell membrane. The catalysed reaction is a 1,2-diacyl-sn-glycero-3-phospho-L-serine + H(+) = a 1,2-diacyl-sn-glycero-3-phosphoethanolamine + CO2. Its pathway is phospholipid metabolism; phosphatidylethanolamine biosynthesis; phosphatidylethanolamine from CDP-diacylglycerol: step 2/2. In terms of biological role, catalyzes the formation of phosphatidylethanolamine (PtdEtn) from phosphatidylserine (PtdSer). The sequence is that of Phosphatidylserine decarboxylase proenzyme from Chlamydia felis (strain Fe/C-56) (Chlamydophila felis).